Consider the following 244-residue polypeptide: Glucosamine-6-phosphate deaminase (244 aa).

Asp-67 functions as the Proton acceptor; for enolization step in the catalytic mechanism. Asn-136 (for ring-opening step) is an active-site residue. The Proton acceptor; for ring-opening step role is filled by His-138. Glu-143 serves as the catalytic For ring-opening step.

The protein belongs to the glucosamine/galactosamine-6-phosphate isomerase family. NagB subfamily.

The catalysed reaction is alpha-D-glucosamine 6-phosphate + H2O = beta-D-fructose 6-phosphate + NH4(+). The protein operates within amino-sugar metabolism; N-acetylneuraminate degradation; D-fructose 6-phosphate from N-acetylneuraminate: step 5/5. Catalyzes the reversible isomerization-deamination of glucosamine 6-phosphate (GlcN6P) to form fructose 6-phosphate (Fru6P) and ammonium ion. The sequence is that of Glucosamine-6-phosphate deaminase from Clostridium botulinum (strain Okra / Type B1).